The following is a 211-amino-acid chain: MASGFLLCPVLLAVFFMSPVEVGAFPLYSLFTNAVIRAQHLHQLAADIYKDFERTYVPEEQRQSSKSSPSAICYSESIPAPTGKDEAQQRSDVELLRFSLALIQSWISPLQTLSRVFSNSLVFGTSDRIFEKLQDLERGIVTLTREIDEGSPRIAAFLTLTYEKFDTNLRNDDALMKNYGLLACFKKDMHKVETYLKVMKCRRFVESNCTL.

The signal sequence occupies residues 1-23; it reads MASGFLLCPVLLAVFFMSPVEVG. Position 40 (His-40) interacts with Zn(2+). Cys-73 and Cys-184 are joined by a disulfide. Glu-193 contributes to the Zn(2+) binding site. A disulfide bridge connects residues Cys-201 and Cys-209.

It belongs to the somatotropin/prolactin family.

Its subcellular location is the secreted. In terms of biological role, growth hormone plays an important role in growth control and is involved in the regulation of several anabolic processes. Implicated as an osmoregulatory substance important for seawater adaptation. This is Somatotropin (gh) from Lepisosteus osseus (Long-nosed gar).